The chain runs to 123 residues: Small ribosomal subunit protein uS12c (123 aa).

The protein belongs to the universal ribosomal protein uS12 family. As to quaternary structure, part of the 30S ribosomal subunit.

The protein localises to the plastid. It is found in the chloroplast. With S4 and S5 plays an important role in translational accuracy. Located at the interface of the 30S and 50S subunits. In Huperzia lucidula (Shining clubmoss), this protein is Small ribosomal subunit protein uS12c (rps12).